Here is a 712-residue protein sequence, read N- to C-terminus: Polyribonucleotide nucleotidyltransferase (712 aa).

Asp493 and Asp499 together coordinate Mg(2+). Residues Pro560–Ile622 form the KH domain. The S1 motif domain occupies Gly632–Lys700.

This sequence belongs to the polyribonucleotide nucleotidyltransferase family. The cofactor is Mg(2+).

It is found in the cytoplasm. The catalysed reaction is RNA(n+1) + phosphate = RNA(n) + a ribonucleoside 5'-diphosphate. Involved in mRNA degradation. Catalyzes the phosphorolysis of single-stranded polyribonucleotides processively in the 3'- to 5'-direction. The sequence is that of Polyribonucleotide nucleotidyltransferase from Salinibacter ruber (strain DSM 13855 / M31).